A 139-amino-acid chain; its full sequence is Class I hydrophobin A (139 aa).

The first 18 residues, 1 to 18 (MKFSIAAAVLALASAVVA), serve as a signal peptide directing secretion. Disulfide bonds link Cys-45/Cys-113, Cys-53/Cys-107, Cys-54/Cys-88, and Cys-114/Cys-133.

This sequence belongs to the fungal hydrophobin family. In terms of assembly, self-assembles to form functional amyloid fibrils called rodlets. Self-assembly into fibrillar rodlets occurs spontaneously at hydrophobic:hydrophilic interfaces and the rodlets further associate laterally to form amphipathic monolayers.

It is found in the secreted. Its subcellular location is the cell wall. Functionally, aerial growth, conidiation, and dispersal of filamentous fungi in the environment rely upon a capability of their secreting small amphipathic proteins called hydrophobins (HPBs) with low sequence identity. Class I can self-assemble into an outermost layer of rodlet bundles on aerial cell surfaces, conferring cellular hydrophobicity that supports fungal growth, development and dispersal; whereas Class II form highly ordered films at water-air interfaces through intermolecular interactions but contribute nothing to the rodlet structure. HYPA is a class I hydrophobin that contributes to surface hydrophobicity, and prevents recognition by the cellular immune defense system. The polypeptide is Class I hydrophobin A (Arthroderma benhamiae (strain ATCC MYA-4681 / CBS 112371) (Trichophyton mentagrophytes)).